The primary structure comprises 81 residues: Extracellular matrix regulatory protein B (81 aa).

Its function is as follows. Regulates the biosynthesis of the extracellular matrix and the biofilm formation. May act as an enhancer of biofilm gene expression. Acts in parallel to the pathway that governs SinR derepression. In Bacillus subtilis (strain 168), this protein is Extracellular matrix regulatory protein B.